Reading from the N-terminus, the 846-residue chain is DNA mismatch repair protein MutS (846 aa).

610–617 is an ATP binding site; sequence GPNMGGKS.

This sequence belongs to the DNA mismatch repair MutS family.

In terms of biological role, this protein is involved in the repair of mismatches in DNA. It is possible that it carries out the mismatch recognition step. This protein has a weak ATPase activity. The chain is DNA mismatch repair protein MutS from Legionella pneumophila (strain Lens).